The chain runs to 408 residues: Arginine biosynthesis bifunctional protein ArgJ (408 aa).

Residues T156, K182, T193, E279, N403, and S408 each coordinate substrate. The active-site Nucleophile is T193.

This sequence belongs to the ArgJ family. As to quaternary structure, heterotetramer of two alpha and two beta chains.

The protein localises to the cytoplasm. The enzyme catalyses N(2)-acetyl-L-ornithine + L-glutamate = N-acetyl-L-glutamate + L-ornithine. It carries out the reaction L-glutamate + acetyl-CoA = N-acetyl-L-glutamate + CoA + H(+). The protein operates within amino-acid biosynthesis; L-arginine biosynthesis; L-ornithine and N-acetyl-L-glutamate from L-glutamate and N(2)-acetyl-L-ornithine (cyclic): step 1/1. Its pathway is amino-acid biosynthesis; L-arginine biosynthesis; N(2)-acetyl-L-ornithine from L-glutamate: step 1/4. Catalyzes two activities which are involved in the cyclic version of arginine biosynthesis: the synthesis of N-acetylglutamate from glutamate and acetyl-CoA as the acetyl donor, and of ornithine by transacetylation between N(2)-acetylornithine and glutamate. The polypeptide is Arginine biosynthesis bifunctional protein ArgJ (Bordetella bronchiseptica (strain ATCC BAA-588 / NCTC 13252 / RB50) (Alcaligenes bronchisepticus)).